The chain runs to 131 residues: Small ribosomal subunit protein uS8 (131 aa).

This sequence belongs to the universal ribosomal protein uS8 family. As to quaternary structure, part of the 30S ribosomal subunit. Contacts proteins S5 and S12.

Functionally, one of the primary rRNA binding proteins, it binds directly to 16S rRNA central domain where it helps coordinate assembly of the platform of the 30S subunit. This Polaromonas sp. (strain JS666 / ATCC BAA-500) protein is Small ribosomal subunit protein uS8.